A 267-amino-acid chain; its full sequence is B3 domain-containing protein At3g11580 (267 aa).

The segment at residues 29–143 is a DNA-binding region (TF-B3); it reads FEKSLTPSDV…RLFIGWRRRG (115 aa).

It localises to the nucleus. This chain is B3 domain-containing protein At3g11580 (ARF32), found in Arabidopsis thaliana (Mouse-ear cress).